The chain runs to 160 residues: Cytochrome b6-f complex subunit 4 (160 aa).

The next 3 membrane-spanning stretches (helical) occupy residues Leu36–Val56, Leu95–Glu115, and Ala131–Ile151.

It belongs to the cytochrome b family. PetD subfamily. As to quaternary structure, the 4 large subunits of the cytochrome b6-f complex are cytochrome b6, subunit IV (17 kDa polypeptide, petD), cytochrome f and the Rieske protein, while the 4 small subunits are petG, petL, petM and petN. The complex functions as a dimer.

Its subcellular location is the plastid. It localises to the cyanelle thylakoid membrane. Component of the cytochrome b6-f complex, which mediates electron transfer between photosystem II (PSII) and photosystem I (PSI), cyclic electron flow around PSI, and state transitions. This is Cytochrome b6-f complex subunit 4 from Cyanophora paradoxa.